The sequence spans 497 residues: Glutamate--tRNA ligase (497 aa).

The short motif at 12-22 (PSPTGHLHIGN) is the 'HIGH' region element. The short motif at 259–263 (KLSKR) is the 'KMSKS' region element. Lys-262 contacts ATP.

Belongs to the class-I aminoacyl-tRNA synthetase family. Glutamate--tRNA ligase type 1 subfamily. In terms of assembly, monomer.

Its subcellular location is the cytoplasm. The enzyme catalyses tRNA(Glu) + L-glutamate + ATP = L-glutamyl-tRNA(Glu) + AMP + diphosphate. In terms of biological role, catalyzes the attachment of glutamate to tRNA(Glu) in a two-step reaction: glutamate is first activated by ATP to form Glu-AMP and then transferred to the acceptor end of tRNA(Glu). This Lacticaseibacillus casei (strain BL23) (Lactobacillus casei) protein is Glutamate--tRNA ligase.